We begin with the raw amino-acid sequence, 88 residues long: MGKLVGAPKGHDRYRDPKTHQITPALYRVRAPFFWRNTIALFAVSSIPLAVYLYTFKKMGDDDLGDIPIPPISDEELQKLKLEYENQK.

The Mitochondrial matrix portion of the chain corresponds to 1-32 (MGKLVGAPKGHDRYRDPKTHQITPALYRVRAP). Residues 33–55 (FFWRNTIALFAVSSIPLAVYLYT) form a helical membrane-spanning segment. Residues 56–88 (FKKMGDDDLGDIPIPPISDEELQKLKLEYENQK) lie on the Mitochondrial intermembrane side of the membrane.

This sequence belongs to the COA3 family. As to quaternary structure, component of 250-400 kDa complexes called cytochrome oxidase assembly intermediates or COA complexes.

The protein localises to the mitochondrion inner membrane. Its function is as follows. Required for assembly of cytochrome c oxidase (complex IV). This is Cytochrome c oxidase assembly factor 3, mitochondrial (COA3) from Candida albicans (strain WO-1) (Yeast).